Here is a 231-residue protein sequence, read N- to C-terminus: Somatolactin-1 (231 aa).

Positions 1–24 are cleaved as a signal peptide; the sequence is MRMIRAIKQGQWAVLLWPYLLTAS. 3 cysteine pairs are disulfide-bonded: Cys29-Cys39, Cys89-Cys205, and Cys222-Cys230. An N-linked (GlcNAc...) asparagine glycan is attached at Asn145.

Belongs to the somatotropin/prolactin family. In terms of tissue distribution, pituitary gland.

The protein resides in the secreted. This chain is Somatolactin-1, found in Sparus aurata (Gilthead sea bream).